Here is a 504-residue protein sequence, read N- to C-terminus: MEEYQVYLELDISRQQHLLYPLIFREYIYGLVYGHDFNGSIFLENLDYDNKSSLLIVKRLITRMDQQNHLIISANDSKKNQFLSYNKNLYSQIISEGFAIVVEIPLSLQLNSSSEESKIIKYYKNLRSIHSIFPFFEDKLTYLNYVSDARIPYPIHLXXXXXXXXXXXXXXPLFHLLRLFFYEYCNWNNLITPKKSISTFSKSNLRVFLFLYNFYVCQYESIFLFLRNKSSHLRLTSFIVLFERIYFYGKIEHFLEVFAKDFSSTFFKELFIHYVRYQEKYILASKNASLLMNKWKNYLIRLWQYHFDVWSQPRTIQINQFSEGSFRLLGYFSNVRLNRSAVRSQMLENSFLIEIVMKKLETIVPIIPLIRSLAKAKFCNVLGHPISKPVWADSSDFYIIDRFLQICRNLSHYYNGSSKKKSLYRVKYILRLSCIKTLARKHKSTVRAFLKRLGSEKLLEEFFTEEEEILSLVFQRVSSTLQGLYRGRVWYLDIIFSNDLVNHE.

It belongs to the intron maturase 2 family. MatK subfamily.

The protein localises to the plastid. It is found in the chloroplast. Its function is as follows. Usually encoded in the trnK tRNA gene intron. Probably assists in splicing its own and other chloroplast group II introns. This chain is Maturase K, found in Lupinus argenteus (Silvery lupine).